The primary structure comprises 374 residues: Queuine tRNA-ribosyltransferase (374 aa).

The active-site Proton acceptor is D89. Substrate contacts are provided by residues 89-93 (DSGGF), D143, Q187, and G214. The tract at residues 245-251 (GVGKPED) is RNA binding. D264 (nucleophile) is an active-site residue. Residues 269-273 (TRNAR) are RNA binding; important for wobble base 34 recognition. Residues C302, C304, C307, and H333 each coordinate Zn(2+).

Belongs to the queuine tRNA-ribosyltransferase family. As to quaternary structure, homodimer. Within each dimer, one monomer is responsible for RNA recognition and catalysis, while the other monomer binds to the replacement base PreQ1. Requires Zn(2+) as cofactor.

The catalysed reaction is 7-aminomethyl-7-carbaguanine + guanosine(34) in tRNA = 7-aminomethyl-7-carbaguanosine(34) in tRNA + guanine. It participates in tRNA modification; tRNA-queuosine biosynthesis. Its function is as follows. Catalyzes the base-exchange of a guanine (G) residue with the queuine precursor 7-aminomethyl-7-deazaguanine (PreQ1) at position 34 (anticodon wobble position) in tRNAs with GU(N) anticodons (tRNA-Asp, -Asn, -His and -Tyr). Catalysis occurs through a double-displacement mechanism. The nucleophile active site attacks the C1' of nucleotide 34 to detach the guanine base from the RNA, forming a covalent enzyme-RNA intermediate. The proton acceptor active site deprotonates the incoming PreQ1, allowing a nucleophilic attack on the C1' of the ribose to form the product. After dissociation, two additional enzymatic reactions on the tRNA convert PreQ1 to queuine (Q), resulting in the hypermodified nucleoside queuosine (7-(((4,5-cis-dihydroxy-2-cyclopenten-1-yl)amino)methyl)-7-deazaguanosine). The polypeptide is Queuine tRNA-ribosyltransferase (Shewanella sp. (strain W3-18-1)).